A 415-amino-acid polypeptide reads, in one-letter code: Runt-related transcription factor 3 (415 aa).

Disordered regions lie at residues 1–48, 176–266, and 375–415; these read MRIP…GGRA, GPRE…FPDP, and NLMN…WRPY. A Runt domain is found at 54–182; it reads SMVDVLADHA…TVDGPREPRR (129 aa). Positions 186-205 are enriched in basic and acidic residues; that stretch reads KLEDQTKPFPDRFGDLERLR. Residue Lys192 forms a Glycyl lysine isopeptide (Lys-Gly) (interchain with G-Cter in SUMO2) linkage. Residues 209–240 are compositionally biased toward polar residues; sequence TPSTPSPRGSLSTTSHFSSQPQTPIQGTSELN. Phosphoserine is present on Ser243. A compositionally biased stretch (polar residues) spans 393–402; that stretch reads SHSNSPTALS. Over residues 406–415 the composition is skewed to basic and acidic residues; that stretch reads RMDEAVWRPY.

Heterodimer with CBFB. RUNX3 binds DNA as a monomer and through the Runt domain. DNA-binding is increased by heterodimerization. Interacts with TLE1 and SUV39H1. The tyrosine phosphorylated form (via runt domain) interacts with SRC (via protein kinase domain). Interacts with FYN and LCK. Interacts with FOXP3. Interacts with ZFHX3. Interacts with TBX21. Phosphorylated on tyrosine residues by SRC. Phosphorylated by LCK and FYN. Expressed in gastric cancer tissues (at protein level).

Its subcellular location is the nucleus. The protein resides in the cytoplasm. Its function is as follows. Forms the heterodimeric complex core-binding factor (CBF) with CBFB. RUNX members modulate the transcription of their target genes through recognizing the core consensus binding sequence 5'-TGTGGT-3', or very rarely, 5'-TGCGGT-3', within their regulatory regions via their runt domain, while CBFB is a non-DNA-binding regulatory subunit that allosterically enhances the sequence-specific DNA-binding capacity of RUNX. The heterodimers bind to the core site of a number of enhancers and promoters, including murine leukemia virus, polyomavirus enhancer, T-cell receptor enhancers, LCK, IL3 and GM-CSF promoters. May be involved in the control of cellular proliferation and/or differentiation. In association with ZFHX3, up-regulates CDKN1A promoter activity following TGF-beta stimulation. CBF complexes repress ZBTB7B transcription factor during cytotoxic (CD8+) T cell development. They bind to RUNX-binding sequence within the ZBTB7B locus acting as transcriptional silencer and allowing for cytotoxic T cell differentiation. CBF complexes binding to the transcriptional silencer is essential for recruitment of nuclear protein complexes that catalyze epigenetic modifications to establish epigenetic ZBTB7B silencing. Necessary for the development and survival of sensory neurons expressing parvalbumin. The sequence is that of Runt-related transcription factor 3 (RUNX3) from Homo sapiens (Human).